The following is a 376-amino-acid chain: 23S rRNA (uracil(747)-C(5))-methyltransferase RlmC (376 aa).

[4Fe-4S] cluster contacts are provided by Cys3, Cys11, Cys14, and Cys87. S-adenosyl-L-methionine-binding residues include Gln212, Phe241, Glu262, and Asn307. The active-site Nucleophile is Cys334.

This sequence belongs to the class I-like SAM-binding methyltransferase superfamily. RNA M5U methyltransferase family. RlmC subfamily.

The enzyme catalyses uridine(747) in 23S rRNA + S-adenosyl-L-methionine = 5-methyluridine(747) in 23S rRNA + S-adenosyl-L-homocysteine + H(+). In terms of biological role, catalyzes the formation of 5-methyl-uridine at position 747 (m5U747) in 23S rRNA. The polypeptide is 23S rRNA (uracil(747)-C(5))-methyltransferase RlmC (Citrobacter koseri (strain ATCC BAA-895 / CDC 4225-83 / SGSC4696)).